The sequence spans 401 residues: MARNIVVEEIVRTPVEMQQVELVERKGIGHPDSIADGIAEAVSRALCREYIRRYGVILHHNTDQVEVVGGRAYPRFGGGEVVKPIYILLSGRAVELVDQELFPVHEVAIKAAKNYLKNAIRHLDVENHVIIDSRIGQGSVDLVSVFNKARENPIPLANDTSFGVGYAPLSETERLVLETEKLLNSEKFKKEYPAVGEDIKVMGLRRGNEIDLTIAAAIVDSEVATPKEYLEVKDKIKEAVEELAKEITSRKVNIYVNTADDPERGIYYITVTGTSAEAGDDGSVGRGNRVNGLITPNRHMSMEAAAGKNPVSHVGKIYNILAMLIAEDIAKTLPVEEVYVRILSQIGKPIDQPLVASIQVIPKPGHSVKEFEKDAYSIADEWLANITKVQKMILEDKISVF.

Residue 136-141 (GQGSVD) coordinates ATP.

The protein belongs to the AdoMet synthase 2 family. The cofactor is Mg(2+).

The enzyme catalyses L-methionine + ATP + H2O = S-adenosyl-L-methionine + phosphate + diphosphate. It functions in the pathway amino-acid biosynthesis; S-adenosyl-L-methionine biosynthesis; S-adenosyl-L-methionine from L-methionine: step 1/1. Functionally, catalyzes the formation of S-adenosylmethionine from methionine and ATP. The sequence is that of S-adenosylmethionine synthase from Pyrococcus furiosus (strain ATCC 43587 / DSM 3638 / JCM 8422 / Vc1).